We begin with the raw amino-acid sequence, 201 residues long: Molybdenum cofactor guanylyltransferase (201 aa).

GTP contacts are provided by residues 14 to 16, Lys-31, and Asp-104; that span reads LAG. Position 104 (Asp-104) interacts with Mg(2+).

The protein belongs to the MobA family. As to quaternary structure, monomer. Requires Mg(2+) as cofactor.

The protein resides in the cytoplasm. It carries out the reaction Mo-molybdopterin + GTP + H(+) = Mo-molybdopterin guanine dinucleotide + diphosphate. Functionally, transfers a GMP moiety from GTP to Mo-molybdopterin (Mo-MPT) cofactor (Moco or molybdenum cofactor) to form Mo-molybdopterin guanine dinucleotide (Mo-MGD) cofactor. This is Molybdenum cofactor guanylyltransferase from Helicobacter pylori (strain ATCC 700392 / 26695) (Campylobacter pylori).